A 45-amino-acid polypeptide reads, in one-letter code: Photosystem II reaction center protein K (45 aa).

The propeptide occupies 1–8; that stretch reads MNSALFLA. Residues 23–43 form a helical membrane-spanning segment; it reads ILPVIPVFFLLLAFVWQAAIG.

This sequence belongs to the PsbK family. PSII is composed of 1 copy each of membrane proteins PsbA, PsbB, PsbC, PsbD, PsbE, PsbF, PsbH, PsbI, PsbJ, PsbK, PsbL, PsbM, PsbT, PsbX, PsbY, PsbZ, Psb30/Ycf12, at least 3 peripheral proteins of the oxygen-evolving complex and a large number of cofactors. It forms dimeric complexes.

The protein localises to the plastid. It localises to the chloroplast thylakoid membrane. Its function is as follows. One of the components of the core complex of photosystem II (PSII). PSII is a light-driven water:plastoquinone oxidoreductase that uses light energy to abstract electrons from H(2)O, generating O(2) and a proton gradient subsequently used for ATP formation. It consists of a core antenna complex that captures photons, and an electron transfer chain that converts photonic excitation into a charge separation. The chain is Photosystem II reaction center protein K from Pyropia yezoensis (Susabi-nori).